The primary structure comprises 371 residues: GDSL esterase/lipase At3g27950 (371 aa).

Positions 1-23 are cleaved as a signal peptide; the sequence is MAISKITLAIIVLLLGFTEKLSA. Residue Ser-39 is the Nucleophile of the active site. 5 N-linked (GlcNAc...) asparagine glycosylation sites follow: Asn-82, Asn-143, Asn-178, Asn-194, and Asn-315. Catalysis depends on residues Asp-334 and His-337.

Belongs to the 'GDSL' lipolytic enzyme family.

The protein localises to the secreted. This is GDSL esterase/lipase At3g27950 from Arabidopsis thaliana (Mouse-ear cress).